Here is a 1475-residue protein sequence, read N- to C-terminus: Protein Shroom4 (1475 aa).

A PDZ domain is found at 10–92; sequence YVPVQLQGGA…ILKLIVRRRN (83 aa). Disordered regions lie at residues 151-175 and 202-321; these read EKSS…GHLL and CALS…PPRS. Residues 249–258 show a composition bias toward polar residues; it reads TSTSHASSYS. Basic and acidic residues predominate over residues 294 to 312; the sequence is EQHRASEPVDSLPQKEKPG. Residue Ser412 is modified to Phosphoserine. 4 disordered regions span residues 432 to 523, 542 to 577, 610 to 644, and 658 to 688; these read SKGM…PSAT, HTEA…NRRR, NEAV…SPGD, and SECL…GQSS. A compositionally biased stretch (basic and acidic residues) spans 471 to 485; sequence QTRKERKTTPLDDKL. The span at 513 to 523 shows a compositional bias: polar residues; the sequence is SDLTSQQPSAT. Basic and acidic residues predominate over residues 542–557; that stretch reads HTEASEEGDNEPKECG. Residues 558–568 show a composition bias toward gly residues; the sequence is RLGGRRSGGPR. Low complexity-rich tracts occupy residues 624–635 and 658–667; these read PLSASNASLLPS and SECLSQASES. A Phosphoserine modification is found at Ser722. 2 stretches are compositionally biased toward polar residues: residues 727-738 and 775-791; these read AQPQVALSTEAP and KSLS…HNNK. Disordered regions lie at residues 727–753 and 772–791; these read AQPQ…STPQ and ESSK…HNNK. A Phosphoserine modification is found at Ser1010. Disordered regions lie at residues 1022 to 1041 and 1055 to 1185; these read SNKP…ASMP and SLEP…QSLQ. The span at 1090-1099 shows a compositional bias: pro residues; that stretch reads FPPPRPPPPN. Residues 1110-1125 show a composition bias toward low complexity; the sequence is QLQQQQQQQQQQQQQQ. Acidic residues predominate over residues 1128–1145; sequence EEEEEKEQEEEGEKEEDL. Residues 1149-1168 show a composition bias toward polar residues; it reads YFSSELTGSCAPNTEEQPQS. The region spanning 1190–1469 is the ASD2 domain; that stretch reads FALHPSNFVP…QLKCLKESLH (280 aa). Residues 1380-1470 adopt a coiled-coil conformation; sequence SESNQEKLVL…LKCLKESLHL (91 aa).

It belongs to the shroom family. As to quaternary structure, interacts directly with F-actin. As to expression, detected in most adult tissues examined. Expressed in brain, lung, heart, liver, kidney, muscle and ovary. Expressed throughout the brain, with high expression in the brain stem and cerebellum and weaker expression in the hypothalamus, the hippocampus and the olfactory bulb. Expressed in wide range of cell types during development, including vascular endothelium and the polarized epithelium of the neural tube and kidney.

It is found in the cytoplasm. The protein resides in the cytoskeleton. Probable regulator of cytoskeletal architecture that plays an important role in development. May regulate cellular and cytoskeletal architecture by modulating the spatial distribution of myosin II. The sequence is that of Protein Shroom4 (Shroom4) from Mus musculus (Mouse).